We begin with the raw amino-acid sequence, 82 residues long: MKKDIHPDNHQVIFQDVNSGYRFLSHSTKKSEETAEWEDGKTYPLIKVEVSSDTHPFYTGRQKFNEKGGRVEQFNKKYNMGK.

The protein belongs to the bacterial ribosomal protein bL31 family. Type B subfamily. As to quaternary structure, part of the 50S ribosomal subunit.

In Bacillus velezensis (strain DSM 23117 / BGSC 10A6 / LMG 26770 / FZB42) (Bacillus amyloliquefaciens subsp. plantarum), this protein is Large ribosomal subunit protein bL31B.